Here is a 271-residue protein sequence, read N- to C-terminus: Glutamate racemase (271 aa).

Substrate is bound by residues 10–11 (DS) and 42–43 (YG). Cysteine 73 (proton donor/acceptor) is an active-site residue. Residue 74–75 (NT) participates in substrate binding. The active-site Proton donor/acceptor is cysteine 183. 184 to 185 (TH) contacts substrate.

Belongs to the aspartate/glutamate racemases family.

It catalyses the reaction L-glutamate = D-glutamate. It functions in the pathway cell wall biogenesis; peptidoglycan biosynthesis. Functionally, provides the (R)-glutamate required for cell wall biosynthesis. The protein is Glutamate racemase of Lactococcus lactis subsp. cremoris (strain SK11).